We begin with the raw amino-acid sequence, 578 residues long: Proline--tRNA ligase (578 aa).

The protein belongs to the class-II aminoacyl-tRNA synthetase family. ProS type 1 subfamily. In terms of assembly, homodimer.

It is found in the cytoplasm. The catalysed reaction is tRNA(Pro) + L-proline + ATP = L-prolyl-tRNA(Pro) + AMP + diphosphate. Its function is as follows. Catalyzes the attachment of proline to tRNA(Pro) in a two-step reaction: proline is first activated by ATP to form Pro-AMP and then transferred to the acceptor end of tRNA(Pro). As ProRS can inadvertently accommodate and process non-cognate amino acids such as alanine and cysteine, to avoid such errors it has two additional distinct editing activities against alanine. One activity is designated as 'pretransfer' editing and involves the tRNA(Pro)-independent hydrolysis of activated Ala-AMP. The other activity is designated 'posttransfer' editing and involves deacylation of mischarged Ala-tRNA(Pro). The misacylated Cys-tRNA(Pro) is not edited by ProRS. This chain is Proline--tRNA ligase, found in Burkholderia cenocepacia (strain ATCC BAA-245 / DSM 16553 / LMG 16656 / NCTC 13227 / J2315 / CF5610) (Burkholderia cepacia (strain J2315)).